The primary structure comprises 350 residues: Kievitone hydratase (350 aa).

The first 19 residues, 1-19 (MMISSVLVAGVVAVSAALA), serve as a signal peptide directing secretion.

As to quaternary structure, homodimer. In terms of processing, glycosylated.

It localises to the secreted. The catalysed reaction is kievitone hydrate = kievitone + H2O. Functionally, converts fungitoxic kievitone to the less toxic kievitone hydrate, and thereby protects the pathogenic fungus against this phytoalexin. The polypeptide is Kievitone hydratase (khs) (Fusarium solani subsp. phaseoli (Nectria haematococca)).